Here is a 461-residue protein sequence, read N- to C-terminus: Ribonuclease inhibitor (461 aa).

An N-acetylserine modification is found at serine 2. Positions 2-11 (SLDIQSLDIQ) are 2 X 5 AA tandem repeats of S-L-D-I-Q. LRR repeat units lie at residues 20–48 (WAELLPLLQQCQVVRLDDCGLTEARCKDI), 49–76 (SSALRVNPALAELNLRSNELGDVGVHCV), 77–105 (LQGLQSPSCKIQKLSLQNCCLTGAGCGVL), 106–133 (SSTLRTLPTLQELHLSDNLLGDAGLQLL), 134–162 (CEGLLDPQCRLEKLQLEYCNLSAASCKPL), 163–190 (ASVLRAKPDFKELTVSNNDINEAGVRVL), 191–219 (CQGLKDSPCQLEALKLESCGVTSDNCRDL), 220–247 (CGIVASKASLRELALGSNKLGDVGMAEL), 248–276 (CPGLLHPSSRLRTLWIWECGITAKGCGDL), 277–304 (CRVLRAKESLKELSLAGNELGDEGARLL), 305–333 (CETLLEPGCQLESLWVKSCSFTAACCSHF), 334–361 (SSVLAQNKFLLELQISNNRLEDAGVQEL), 362–390 (CQGLGQPGSVLRVLWLADCDVSDSSCSSL), 391–418 (AATLLANHSLRELDLSNNCLGDAGILQL), and 419–447 (VESVRQPGCLLEQLVLYDIYWSEEMEDRL). Serine 91 is subject to Phosphoserine.

In terms of assembly, forms high-affinity heterodimers with RNASE1, ANG and RNASE2.

The protein localises to the cytoplasm. The protein resides in the nucleus. In terms of biological role, ribonuclease inhibitor which inhibits RNASE1, RNASE2 and angiogenin (ANG). May play a role in redox homeostasis. Required to inhibit the cytotoxic tRNA ribonuclease activity of ANG in the cytoplasm in absence of stress. Relocates to the nucleus in response to stress, relieving inhibition of ANG in the cytoplasm, and inhibiting the angiogenic activity of ANG in the nucleus. The chain is Ribonuclease inhibitor (RNH1) from Pan troglodytes (Chimpanzee).